A 174-amino-acid polypeptide reads, in one-letter code: MDYYRVGTLVNTHGIRGEVKVVVVTDFPEERFKVGQQLSLFKTPDETTGGITVKIAKAREQKGLYFLTFEGLDNINDVERYKGWTIKVPAEALHALPAGEYYYHQIVGLQVVTTADEPLGTIKEILSPGANDVWVVKRDHGQSDVLLPKIPQVIKDVDLDAGVVTVELMEGLID.

Positions 98 to 172 (AGEYYYHQIV…VVTVELMEGL (75 aa)) constitute a PRC barrel domain.

Belongs to the RimM family. Binds ribosomal protein uS19.

The protein localises to the cytoplasm. Its function is as follows. An accessory protein needed during the final step in the assembly of 30S ribosomal subunit, possibly for assembly of the head region. Essential for efficient processing of 16S rRNA. May be needed both before and after RbfA during the maturation of 16S rRNA. It has affinity for free ribosomal 30S subunits but not for 70S ribosomes. The chain is Ribosome maturation factor RimM from Lactiplantibacillus plantarum (strain ATCC BAA-793 / NCIMB 8826 / WCFS1) (Lactobacillus plantarum).